Consider the following 107-residue polypeptide: U1-lycotoxin-Ls1q (107 aa).

A signal peptide spans 1–20; that stretch reads MMKVLVVVALLVTLISYSSS. Positions 21-41 are excised as a propeptide; sequence EGIDDLEADELLSLMANEQTR. 4 disulfides stabilise this stretch: C44–C59, C51–C68, C58–C86, and C70–C84.

The protein belongs to the neurotoxin 19 (CSTX) family. 04 (U1-Lctx) subfamily. In terms of tissue distribution, expressed by the venom gland.

The protein localises to the secreted. In Lycosa singoriensis (Wolf spider), this protein is U1-lycotoxin-Ls1q.